We begin with the raw amino-acid sequence, 328 residues long: Gonadotropin-releasing hormone receptor (328 aa).

Residues 1–38 are Extracellular-facing; that stretch reads MANGDSPDQNENHCSAINSSILLTPGSLPTLTLSGKIR. N18 carries an N-linked (GlcNAc...) asparagine glycan. The helical transmembrane segment at 39–58 threads the bilayer; that stretch reads VTVTFFLFLLSTIFNTSFLL. Residues 59–77 lie on the Cytoplasmic side of the membrane; sequence KLQNWTQRKEKRKKLSKMK. A helical membrane pass occupies residues 78–97; sequence VLLKHLTLANLLETLIVMPL. The Extracellular segment spans residues 98–115; the sequence is DGMWNITVQWYAGELLCK. N-linked (GlcNAc...) asparagine glycosylation is present at N102. The cysteines at positions 114 and 196 are disulfide-linked. The chain crosses the membrane as a helical span at residues 116–137; it reads VLSYLKLFSMYAPAFMMVVISL. Residues 138 to 164 are Cytoplasmic-facing; the sequence is DRSLAITRPLAVKSNSKLGQFMIGLAW. The chain crosses the membrane as a helical span at residues 165-184; sequence LLSSIFAGPQLYIFGMIHLA. The Extracellular portion of the chain corresponds to 185–212; that stretch reads DDSGQTEGFSQCVTHCSFPQWWHQAFYN. A helical transmembrane segment spans residues 213 to 232; sequence FFTFSCLFIIPLLIMLICNA. Residues 233–281 are Cytoplasmic-facing; it reads KIIFTLTRVLHQDPHKLQLNQSKNNIPQARLRTLKMTVAFATSFTVCWT. A helical membrane pass occupies residues 282 to 300; the sequence is PYYVLGIWYWFDPDMVNRV. Residues 301–306 are Extracellular-facing; that stretch reads SDPVNH. Residues 307–326 traverse the membrane as a helical segment; sequence FFFLFAFLNPCFDPLIYGYF. The Cytoplasmic portion of the chain corresponds to 327–328; sequence SL.

The protein belongs to the G-protein coupled receptor 1 family.

The protein resides in the cell membrane. Its function is as follows. Receptor for gonadotropin releasing hormone (GnRH) that mediates the action of GnRH to stimulate the secretion of the gonadotropic hormones luteinizing hormone (LH) and follicle-stimulating hormone (FSH). This receptor mediates its action by association with G-proteins that activate a phosphatidylinositol-calcium second messenger system. In Ovis aries (Sheep), this protein is Gonadotropin-releasing hormone receptor (GNRHR).